We begin with the raw amino-acid sequence, 188 residues long: Elongation factor P (188 aa).

It belongs to the elongation factor P family.

The protein resides in the cytoplasm. It functions in the pathway protein biosynthesis; polypeptide chain elongation. Functionally, involved in peptide bond synthesis. Stimulates efficient translation and peptide-bond synthesis on native or reconstituted 70S ribosomes in vitro. Probably functions indirectly by altering the affinity of the ribosome for aminoacyl-tRNA, thus increasing their reactivity as acceptors for peptidyl transferase. The chain is Elongation factor P from Phytoplasma mali (strain AT).